A 697-amino-acid polypeptide reads, in one-letter code: Elongation factor G (697 aa).

The region spanning 8 to 290 is the tr-type G domain; the sequence is ERYRNFGIMA…AVVDYLPSPL (283 aa). Residues 17 to 24, 88 to 92, and 142 to 145 each bind GTP; these read AHIDAGKT, DTPGH, and NKLD.

This sequence belongs to the TRAFAC class translation factor GTPase superfamily. Classic translation factor GTPase family. EF-G/EF-2 subfamily.

The protein localises to the cytoplasm. Its function is as follows. Catalyzes the GTP-dependent ribosomal translocation step during translation elongation. During this step, the ribosome changes from the pre-translocational (PRE) to the post-translocational (POST) state as the newly formed A-site-bound peptidyl-tRNA and P-site-bound deacylated tRNA move to the P and E sites, respectively. Catalyzes the coordinated movement of the two tRNA molecules, the mRNA and conformational changes in the ribosome. The polypeptide is Elongation factor G (Sphingopyxis alaskensis (strain DSM 13593 / LMG 18877 / RB2256) (Sphingomonas alaskensis)).